A 193-amino-acid chain; its full sequence is Spermatogenesis-associated protein 3 (193 aa).

Basic residues predominate over residues 1 to 16 (MKKVKKKKSDSRRRRN). A disordered region spans residues 1–92 (MKKVKKKKSD…SPFLVPMEPK (92 aa)). Over residues 17-35 (SISPQTSSDSSQQPSSETP) the composition is skewed to low complexity. The segment covering 36-48 (PSCPEPASPPSKP) has biased composition (pro residues).

In terms of tissue distribution, strongly expressed in testis. Faintly expressed in epididymis, ovary, spleen, kidney, lung, heart, brain, epididymis, liver and skeletal muscle.

It localises to the cell projection. The protein localises to the cilium. It is found in the flagellum. The chain is Spermatogenesis-associated protein 3 (Spata3) from Mus musculus (Mouse).